We begin with the raw amino-acid sequence, 344 residues long: Dihydroorotase (344 aa).

Zn(2+) contacts are provided by H14 and H16. Substrate contacts are provided by residues 16–18 (HLR) and N42. Zn(2+)-binding residues include K100, H137, and H175. Position 100 is an N6-carboxylysine (K100). H137 lines the substrate pocket. L220 contacts substrate. D248 is a Zn(2+) binding site. Residue D248 is part of the active site. Residues H252 and A264 each coordinate substrate.

Belongs to the metallo-dependent hydrolases superfamily. DHOase family. Class II DHOase subfamily. In terms of assembly, homodimer. Requires Zn(2+) as cofactor.

The enzyme catalyses (S)-dihydroorotate + H2O = N-carbamoyl-L-aspartate + H(+). It participates in pyrimidine metabolism; UMP biosynthesis via de novo pathway; (S)-dihydroorotate from bicarbonate: step 3/3. Functionally, catalyzes the reversible cyclization of carbamoyl aspartate to dihydroorotate. This is Dihydroorotase from Cupriavidus taiwanensis (strain DSM 17343 / BCRC 17206 / CCUG 44338 / CIP 107171 / LMG 19424 / R1) (Ralstonia taiwanensis (strain LMG 19424)).